The following is a 107-amino-acid chain: MVNFNQFLKQAQSMQKKMQEAQEQMVNARYTGKAGGRLVEITITGRSEVEKVSIDESLLKAEEKEMLEDLIKVAFNDAKQKCDEDSQNSLSGALNGINLPPGFKMPF.

This sequence belongs to the YbaB/EbfC family. Homodimer.

The protein localises to the cytoplasm. It is found in the nucleoid. In terms of biological role, binds to DNA and alters its conformation. May be involved in regulation of gene expression, nucleoid organization and DNA protection. This is Nucleoid-associated protein A1E_05550 from Rickettsia canadensis (strain McKiel).